Reading from the N-terminus, the 416-residue chain is MSERRVAMDLPSGSNASMPLQRHRVSSLRGTRSPSSLDSPPASRTSAVGSLVRAPGVYVGVAPSGGIGGLGARVTRRALGISSVFLQGLRSSGLATAPAPGPERNHATAEDLGGCLVEYMTKVHALEQVSQELETQLRAHLESKAKRSGGWDALRASWASSYQQVGEAVLENARLMLQMETIQAGADDFKERYENEQPFRKAAEEEVSSLYKVIDEANLTKTDLEHQIESLKEELGSLSRSYEEDVKVLYKQLAGSELEQTDVPMGTGLDDVLETIRVQWERDVEKNRAEAGAVLQAKQQTEVVHVSQTQEEKLAAALSVELHDTSRQVQSLQAETESLRALKRGLENTLHDAKHWHDMELQNLGAVVGRLEAELAEIHSETEQQQQERAHLLACKGQLQKDVASYHALLDREESN.

Residues 1 to 48 (MSERRVAMDLPSGSNASMPLQRHRVSSLRGTRSPSSLDSPPASRTSAV) form a disordered region. N-acetylserine is present on Ser2. The tract at residues 2–115 (SERRVAMDLP…HATAEDLGGC (114 aa)) is head. Ser27, Ser33, Ser36, and Ser91 each carry phosphoserine. Residues 28–48 (LRGTRSPSSLDSPPASRTSAV) are compositionally biased toward polar residues. One can recognise an IF rod domain in the interval 105 to 416 (NHATAEDLGG…HALLDREESN (312 aa)). Coiled-coil stretches lie at residues 199-240 (FRKA…SLSR) and 314-391 (LAAA…ERAH). The interval 397–416 (GQLQKDVASYHALLDREESN) is tail.

This sequence belongs to the intermediate filament family. Part of a complex required for lens intermediate filament formation composed of BFSP1, BFSP2, and CRYAA. Found in a complex composed of PPL (via C-terminal linker domain), BFSP1 and BFSP2 in the retinal lens. Within the complex interacts with PPL (via C-terminal linker domain) and with BFSP1. Identified in a complex that contains VIM, EZR, AHNAK, BFSP1, BFSP2, ANK2, PLEC, PRX and spectrin. Interacts with LGSN. Interacts with VIM. As to expression, expressed in the deep and shallow cortices of the retina lens (at protein level).

It is found in the cell membrane. The protein localises to the cytoplasm. Its subcellular location is the cytoskeleton. It localises to the cell cortex. Its function is as follows. Required for the correct formation of lens intermediate filaments as part of a complex composed of BFSP1, BFSP2 and CRYAA. Plays a role in maintenance of retinal lens optical clarity. The chain is Phakinin from Rattus norvegicus (Rat).